The chain runs to 107 residues: Putative double-stranded DNA mimic protein NTHI1680 (107 aa).

The protein belongs to the putative dsDNA mimic protein family.

May act as a double-stranded DNA (dsDNA) mimic. Probably regulates the activity of a dsDNA-binding protein. The chain is Putative double-stranded DNA mimic protein NTHI1680 from Haemophilus influenzae (strain 86-028NP).